The sequence spans 84 residues: Large ribosomal subunit protein bL31B (84 aa).

It belongs to the bacterial ribosomal protein bL31 family. Type B subfamily. Part of the 50S ribosomal subunit.

This chain is Large ribosomal subunit protein bL31B, found in Phocaeicola vulgatus (strain ATCC 8482 / DSM 1447 / JCM 5826 / CCUG 4940 / NBRC 14291 / NCTC 11154) (Bacteroides vulgatus).